Reading from the N-terminus, the 781-residue chain is Potassium transporter 5 (781 aa).

Over residues 1-11 the composition is skewed to polar residues; it reads MTEPLHTSSNG. The segment at 1–24 is disordered; the sequence is MTEPLHTSSNGGAERGPNAAFESE. Over 1 to 63 the chain is Cytoplasmic; that stretch reads MTEPLHTSSN…AKVGWATTLH (63 aa). The chain crosses the membrane as a helical span at residues 64–84; sequence LAFQSIGVVYGDMGTSPLYVF. Residues 85 to 100 lie on the Extracellular side of the membrane; sequence SSTFTNGIKDTNDILG. Residues 101-121 form a helical membrane-spanning segment; it reads VMSLIIYTVVLLPLIKYCFIV. Residues 122 to 187 lie on the Cytoplasmic side of the membrane; the sequence is LRANDNGDGG…EKMENSPNFK (66 aa). A helical transmembrane segment spans residues 188-208; sequence IILFLVTILATSMVIGDGVLT. The Extracellular portion of the chain corresponds to 209–225; it reads PCISVLSAVGGIKESAK. Residues 226-246 traverse the membrane as a helical segment; it reads SLTQGQIAGIAIAILIVLFLV. Topologically, residues 247–257 are cytoplasmic; it reads QRFGTDKVGYS. The helical transmembrane segment at 258 to 278 threads the bilayer; it reads FGPIILTWFIFIAGTGVYNLF. At 279–304 the chain is on the extracellular side; it reads KHDTGVLKAFNPKYIVDYFERNGKQG. The chain crosses the membrane as a helical span at residues 305 to 325; the sequence is WISLGGVILCITGTEAMFADL. The Cytoplasmic portion of the chain corresponds to 326–334; the sequence is GHFNVRAIQ. Residues 335–355 traverse the membrane as a helical segment; it reads IGFSVVLLPSVLLAYIGQAAY. Over 356–381 the chain is Extracellular; that stretch reads LRIYPEHVADTFYKSIPDPLYWPTFV. The helical transmembrane segment at 382 to 402 threads the bilayer; the sequence is VAVAAAIIASQAMISGAFAII. Residues 403–426 lie on the Cytoplasmic side of the membrane; it reads AQSQILGCFPRVRVIHTSTKFHGQ. The chain crosses the membrane as a helical span at residues 427 to 447; that stretch reads VYIPEINYVLMVLCVAVTAIF. Residues 448 to 458 are Extracellular-facing; it reads QTTDKIGNAYG. The chain crosses the membrane as a helical span at residues 459-479; sequence IAVVFVMFITTLLVTLVMVMI. Residues 480–481 lie on the Cytoplasmic side of the membrane; that stretch reads WK. A helical transmembrane segment spans residues 482–502; it reads TSLLWIALFPVIFGGAELIYL. The Extracellular segment spans residues 503-512; it reads SSAFYKFTQG. A helical transmembrane segment spans residues 513-533; that stretch reads GYLPLVFSAILMFIMATWHYV. At 534–781 the chain is on the cytoplasmic side; it reads HVHRYKYELR…LLRVGMTYEI (248 aa). Residues 681 to 707 are disordered; the sequence is VTDPTSEVQDAMSSRNNSDQHTTEPRN. Positions 683–700 are enriched in polar residues; the sequence is DPTSEVQDAMSSRNNSDQ.

The protein belongs to the HAK/KUP transporter (TC 2.A.72.3) family. Expressed in root epidermis, parenchyma of stele tissue and primordial of the lateral root, root-shoot junctions and leaf sheaths. Expressed in germinated embryonic tissue, young tillers, flower organs and pedicels.

The protein resides in the cell membrane. It catalyses the reaction K(+)(in) = K(+)(out). Its function is as follows. High-affinity potassium transporter. Its potassium transporter activity does not seem to be affected by high sodium and low potassium concentrations in the extracellular environment. Invloved in salt stress tolerance by enhancing root potassium uptake and translocation to the shoot to prevent sodium influx during salt stress. Involved in the positive regulation of disease resistance against the rice grassy stunt virus by promoting potassium transport and increasing endogenous plant potassium. In Oryza sativa subsp. japonica (Rice), this protein is Potassium transporter 5 (HAK5).